The chain runs to 1016 residues: DNA polymerase I (1016 aa).

The 308-residue stretch at 1-308 (MPNSIWTSSD…MEFTTLTRRV (308 aa)) folds into the 5'-3' exonuclease domain. Residues 334-361 (GPDLDAAEPEPVAGGIPEVSGESVPMPP) are disordered. Residues 394 to 630 (SAYVTIRDLV…MEARGITVDR (237 aa)) enclose the 3'-5' exonuclease domain. The tract at residues 768–1016 (GRKIRTAFIS…RAATNWDEAH (249 aa)) is polymerase.

The protein belongs to the DNA polymerase type-A family. In terms of assembly, single-chain monomer with multiple functions.

The enzyme catalyses DNA(n) + a 2'-deoxyribonucleoside 5'-triphosphate = DNA(n+1) + diphosphate. Its function is as follows. In addition to polymerase activity, this DNA polymerase exhibits 3'-5' and 5'-3' exonuclease activity. In Rhizobium leguminosarum, this protein is DNA polymerase I (polA).